A 538-amino-acid polypeptide reads, in one-letter code: Potassium channel subfamily K member 10 (538 aa).

Topologically, residues 1–71 are cytoplasmic; it reads MFFLYTDFFL…GLQTVMKWKT (71 aa). The helical transmembrane segment at 72 to 92 threads the bilayer; the sequence is VVAIFVVVVVYLVTGGLVFRA. N-linked (GlcNAc...) asparagine glycosylation is found at asparagine 144, asparagine 147, and asparagine 148. The segment at residues 154–180 is an intramembrane region (pore-forming); the sequence is LGSAFFFAGTVITTIGYGNIAPSTEGG. Positions 167, 168, 169, and 170 each coordinate K(+). The selectivity filter 1 stretch occupies residues 167-172; sequence TIGYGN. A helical transmembrane segment spans residues 182-202; it reads IFCILYAIFGIPLFGFLLAGI. The Cytoplasmic portion of the chain corresponds to 203-233; it reads GDQLGTIFGKSIARVEKVFRKKQVSQTKIRV. Residues 234 to 254 form a helical membrane-spanning segment; it reads ISTILFILAGCIVFVTIPAVI. An intramembrane region (pore-forming) is located at residues 263–294; it reads ALESIYFVVVTLTTVGFGDFVAGGNAGINYRE. K(+) contacts are provided by threonine 276, valine 277, glycine 278, and phenylalanine 279. The segment at 276-281 is selectivity filter 2; that stretch reads TVGFGD. A helical transmembrane segment spans residues 299-319; sequence LVWFWILVGLAYFAAVLSMIG. The Cytoplasmic segment spans residues 320–538; it reads DWLRVLSKKT…ENNSLLEDRN (219 aa). The segment covering 412–421 has biased composition (polar residues); it reads SQESINNRPN. 2 disordered regions span residues 412 to 443 and 510 to 538; these read SQESINNRPNNLRLKGPEQLNKHGQGASEDNI and QHAELENGMIPTDTKDREPENNSLLEDRN. Residues 522 to 538 show a composition bias toward basic and acidic residues; the sequence is DTKDREPENNSLLEDRN.

It belongs to the two pore domain potassium channel (TC 1.A.1.8) family. As to quaternary structure, homodimer; disulfide-linked. Forms heterodimers with other 2-pore domain K(+) channel subunits, such as KCNK2, KCNK4 and KCNK18. Abundantly expressed in pancreas and kidney and to a lower level in brain, testis, colon, and small intestine. In brain, mainly expressed in cerebellum, occipital lobe, putamen, and thalamus. No expression is detected in amygdala and spinal cord. In terms of tissue distribution, strongly expressed in kidney (primarily in the proximal tubule) and pancreas. As to expression, abundantly expressed in brain.

The protein localises to the cell membrane. It catalyses the reaction K(+)(in) = K(+)(out). It carries out the reaction Rb(+)(in) = Rb(+)(out). The catalysed reaction is Cs(+)(in) = Cs(+)(out). Its activity is regulated as follows. Activated by various stimuli including acidic pH, anesthetics chloroform, halothane and isoflurane, mechanical stretch, lipids such as arachidonic, docosahexaenoic and linoleic polyunsaturated fatty acids and lysophosphatidylcholine and lysophosphatidylinositol lysophospholipids. Inhibited by norfluoxetine, the active metabolite of antidepressant fluoxetine (Prozac). Functionally, k(+) channel that conducts voltage-dependent outward rectifying currents upon membrane depolarization. Voltage sensing is coupled to K(+) electrochemical gradient in an 'ion flux gating' mode where outward but not inward ion flow opens the gate. Converts to voltage-independent 'leak' conductance mode upon stimulation by various stimuli including mechanical membrane stretch, acidic pH, heat and lipids. Homo- and heterodimerizes to form functional channels with distinct regulatory and gating properties. In trigeminal ganglia sensory neurons, the heterodimer of KCNK10/TREK-2 and KCNK18/TRESK inhibits neuronal firing and neurogenic inflammation by stabilizing the resting membrane potential at K(+) equilibrium potential as well as by regulating the threshold of action potentials and the spike frequency. Permeable to other monovalent ions such as Rb(+) and Cs(+). The polypeptide is Potassium channel subfamily K member 10 (Homo sapiens (Human)).